The primary structure comprises 495 residues: Catalase (495 aa).

The tract at residues 1-25 is disordered; sequence MSNNKKLTSLFGAPVSDRENSMTAG. Residues H55 and N128 contribute to the active site. Y338 contacts heme.

This sequence belongs to the catalase family. In terms of assembly, homodimer. Heme is required as a cofactor.

The catalysed reaction is 2 H2O2 = O2 + 2 H2O. Its function is as follows. Decomposes hydrogen peroxide into water and oxygen; serves to protect cells from the toxic effects of hydrogen peroxide. The sequence is that of Catalase (katA) from Staphylococcus saprophyticus subsp. saprophyticus (strain ATCC 15305 / DSM 20229 / NCIMB 8711 / NCTC 7292 / S-41).